The primary structure comprises 609 residues: DNA polymerase alpha subunit B (609 aa).

Phosphoserine is present on Ser155. Thr164 is subject to Phosphothreonine. A phosphoserine mark is found at Ser166 and Ser168.

The protein belongs to the DNA polymerase alpha subunit B family. In terms of assembly, component of the alpha DNA polymerase complex (also known as the alpha DNA polymerase-primase complex) consisting of four subunits: the catalytic subunit PolA1, the regulatory subunit PolA2, and the primase complex subunits Prim1 and Prim2 respectively. PolA1 associates with the DNA primase complex before association with PolA2. Phosphorylated in embryos until cycle 13. In terms of tissue distribution, expressed in embryos (at protein level).

It is found in the nucleus. Accessory subunit of the DNA polymerase alpha complex (also known as the alpha DNA polymerase-primase complex) which plays an essential role in the initiation of DNA synthesis. During the S phase of the cell cycle, the DNA polymerase alpha complex (composed of a catalytic subunit PolA1, an accessory subunit PolA2 and two primase subunits, the catalytic subunit Prim1 and the regulatory subunit Prim2) is recruited to DNA at the replicative forks. The primase subunit of the polymerase alpha complex initiates DNA synthesis by oligomerising short RNA primers on both leading and lagging strands. These primers are initially extended by the polymerase alpha catalytic subunit and subsequently transferred to polymerase delta and polymerase epsilon for processive synthesis on the lagging and leading strand, respectively. The sequence is that of DNA polymerase alpha subunit B from Drosophila melanogaster (Fruit fly).